A 448-amino-acid polypeptide reads, in one-letter code: Methionine aminopeptidase 2-1 (448 aa).

The disordered stretch occupies residues 1-83; it reads MAAQVIPELQ…TQKAQTEPPR (83 aa). The span at 32–48 shows a compositional bias: acidic residues; it reads ENEDGDSEDDNGDDQGA. Over residues 59–73 the composition is skewed to basic residues; that stretch reads AKKKKKKKPKKKKKD. Residue histidine 198 participates in substrate binding. Aspartate 218, aspartate 229, and histidine 298 together coordinate a divalent metal cation. Substrate is bound at residue histidine 306. The a divalent metal cation site is built by glutamate 334 and glutamate 429.

The protein belongs to the peptidase M24A family. Methionine aminopeptidase eukaryotic type 2 subfamily. Requires Co(2+) as cofactor. Zn(2+) serves as cofactor. It depends on Mn(2+) as a cofactor. The cofactor is Fe(2+).

Its subcellular location is the cytoplasm. The catalysed reaction is Release of N-terminal amino acids, preferentially methionine, from peptides and arylamides.. Cotranslationally removes the N-terminal methionine from nascent proteins. The N-terminal methionine is often cleaved when the second residue in the primary sequence is small and uncharged (Met-Ala-, Cys, Gly, Pro, Ser, Thr, or Val). In Ajellomyces capsulatus (strain G186AR / H82 / ATCC MYA-2454 / RMSCC 2432) (Darling's disease fungus), this protein is Methionine aminopeptidase 2-1.